We begin with the raw amino-acid sequence, 357 residues long: Protein pelota homolog (357 aa).

This sequence belongs to the eukaryotic release factor 1 family. Pelota subfamily. As to quaternary structure, monomer. The cofactor is a divalent metal cation.

The protein resides in the cytoplasm. Functionally, may function in recognizing stalled ribosomes, interact with stem-loop structures in stalled mRNA molecules, and effect endonucleolytic cleavage of the mRNA. May play a role in the release non-functional ribosomes and degradation of damaged mRNAs. Has endoribonuclease activity. The polypeptide is Protein pelota homolog (Thermococcus onnurineus (strain NA1)).